A 117-amino-acid polypeptide reads, in one-letter code: MAFLMSEFIGLGLAGASVLSNALLRRQELQLQRQALENGLVLKADQLGRLGFNPNEVKNVIVGNSFSSNVRLSNMHNDASVVNAYNVYNPASNGIRKKIKSLNNSVKIYNTTGESSV.

It belongs to the lagovirus VP2 protein family. Homooligomer. The portal-like structure consists in 12 copies of VP2. Interacts with capsid protein VP1.

The protein localises to the virion. The protein resides in the host cytoplasm. In terms of biological role, minor structural protein that forms a portal-like structure at a unique three-fold axis of symmetry, following binding to the host receptor. The channel formed by VP2 may allow the delivery of the viral genome through the host endosomal membrane. The polypeptide is Minor capsid protein VP2 (Rabbit hemorrhagic disease virus (strain AST89) (Ra/LV/RHDV/AST89/1989/SP)).